The following is a 504-amino-acid chain: Cholesterol 7-alpha-monooxygenase (504 aa).

Heme is bound at residue cysteine 444.

This sequence belongs to the cytochrome P450 family. Requires heme as cofactor.

Its subcellular location is the endoplasmic reticulum membrane. The protein resides in the microsome membrane. It carries out the reaction cholesterol + reduced [NADPH--hemoprotein reductase] + O2 = 7alpha-hydroxycholesterol + oxidized [NADPH--hemoprotein reductase] + H2O + H(+). It functions in the pathway lipid metabolism; bile acid biosynthesis. Catalyzes a rate-limiting step in cholesterol catabolism and bile acid biosynthesis by introducing a hydrophilic moiety at position 7 of cholesterol. Important for cholesterol homeostasis. The chain is Cholesterol 7-alpha-monooxygenase (CYP7A1) from Cricetulus griseus (Chinese hamster).